Reading from the N-terminus, the 229-residue chain is uncharacterized protein (229 aa).

The stretch at 66 to 94 (GHEKLQIQSALRDIESAENQARVQQCNAK) forms a coiled coil.

This is an uncharacterized protein from Ostreid herpesvirus 1 (isolate France) (OsHV-1).